A 534-amino-acid chain; its full sequence is Cytochrome c oxidase subunit 1 (534 aa).

Topologically, residues 1-14 (MVQRWLYSTNAKDI) are mitochondrial matrix. The helical transmembrane segment at 15-39 (AVLYFMLAIFSGMAGTAMSLIIRLE) threads the bilayer. Ca(2+)-binding residues include Glu-39, Ala-42, and Gly-44. Over 40–54 (LAAPGSQYLHGNSQL) the chain is Mitochondrial intermembrane. Residues 55 to 88 (FNVLVVGHAVLMIFFLVMPALIGGFGNYLLPLMI) traverse the membrane as a helical segment. His-62 is a binding site for Fe(II)-heme a. At 89-97 (GATDTAFPR) the chain is on the mitochondrial matrix side. The helical transmembrane segment at 98–118 (INNIAFWVLPMGLVCLVTSTL) threads the bilayer. The Mitochondrial intermembrane segment spans residues 119–142 (VESGAGTGWTVYPPLSSIQAHSGP). A helical membrane pass occupies residues 143 to 171 (SVDLAIFALHLTSISSLLGAINFIVTTLN). Over 172–183 (MRTNGMTMHKLP) the chain is Mitochondrial matrix. Residues 184-215 (LFVWSIFITAFLLLLSLPVLSAGITMLLLDRN) form a helical membrane-spanning segment. At 216–228 (FNTSFFEVSGGGD) the chain is on the mitochondrial intermembrane side. A helical transmembrane segment spans residues 229 to 263 (PILYEHLFWFFGHPEVYILIIPGFGIISHVVSTYS). His-241 is a Cu cation binding site. Residues 241–245 (HPEVY) constitute a cross-link (1'-histidyl-3'-tyrosine (His-Tyr)). Tyr-245 provides a ligand contact to O2. Residues 264–269 (KKPVFG) lie on the Mitochondrial matrix side of the membrane. The chain crosses the membrane as a helical span at residues 270–295 (EISMVYAMASIGLLGFLVWSHHMYIV). His-290 and His-291 together coordinate Cu cation. At 296-298 (GLD) the chain is on the mitochondrial intermembrane side. The helical transmembrane segment at 299 to 327 (ADTRAYFTSATMIIAIPTGIKIFSWLATI) threads the bilayer. Over 328-335 (HGGSIRLA) the chain is Mitochondrial matrix. Residues 336–358 (TPMLYAIAFLFLFTMGGLTGVAL) traverse the membrane as a helical segment. Residues 359 to 370 (ANASLDVAFHDT) are Mitochondrial intermembrane-facing. His-368 and Asp-369 together coordinate Mg(2+). A helical transmembrane segment spans residues 371-400 (YYVVGHFHYVLSMGAIFSLFAGYYYWSPQI). His-376 contacts heme a3. His-378 provides a ligand contact to Fe(II)-heme a. The Mitochondrial matrix segment spans residues 401 to 406 (LGLNYN). The helical transmembrane segment at 407–431 (EKLAQIQFWLIFIGANVIFFPMHFL) threads the bilayer. The Mitochondrial intermembrane portion of the chain corresponds to 432 to 449 (GINGMPRRIPDYPDAFAG). Position 441 (Pro-441) interacts with Ca(2+). Residues 450 to 474 (WNYVASIGSFIATLSLFLFIYILYD) traverse the membrane as a helical segment. Topologically, residues 475-534 (QLVNGLNNKVNNKSVIYNKAPDFVESNTIFNLNTVKSSSIEFLLTSPPAVHSFNTPAVQS) are mitochondrial matrix.

It belongs to the heme-copper respiratory oxidase family. As to quaternary structure, component of the cytochrome c oxidase (complex IV, CIV), a multisubunit enzyme composed of 12 subunits. The complex is composed of a catalytic core of 3 subunits COX1, COX2 and COX3, encoded in the mitochondrial DNA, and 9 supernumerary subunits COX4, COX5A (or COX5B), COX6, COX7, COX8, COX9, COX12, COX13 and COX26, which are encoded in the nuclear genome. The complex exists as a monomer or a dimer and forms supercomplexes (SCs) in the inner mitochondrial membrane with a dimer of ubiquinol-cytochrome c oxidoreductase (cytochrome b-c1 complex, complex III, CIII), resulting in 2 different assemblies (supercomplexes III(2)IV and III(2)IV(2)). Heme is required as a cofactor. It depends on Cu cation as a cofactor. Post-translationally, the N-terminus is blocked.

The protein localises to the mitochondrion inner membrane. The enzyme catalyses 4 Fe(II)-[cytochrome c] + O2 + 8 H(+)(in) = 4 Fe(III)-[cytochrome c] + 2 H2O + 4 H(+)(out). It participates in energy metabolism; oxidative phosphorylation. In terms of biological role, component of the cytochrome c oxidase, the last enzyme in the mitochondrial electron transport chain which drives oxidative phosphorylation. The respiratory chain contains 3 multisubunit complexes succinate dehydrogenase (complex II, CII), ubiquinol-cytochrome c oxidoreductase (cytochrome b-c1 complex, complex III, CIII) and cytochrome c oxidase (complex IV, CIV), that cooperate to transfer electrons derived from NADH and succinate to molecular oxygen, creating an electrochemical gradient over the inner membrane that drives transmembrane transport and the ATP synthase. Cytochrome c oxidase is the component of the respiratory chain that catalyzes the reduction of oxygen to water. Electrons originating from reduced cytochrome c in the intermembrane space (IMS) are transferred via the dinuclear copper A center (CU(A)) of COX2 and heme A of COX1 to the active site in COX1, a binuclear center (BNC) formed by heme A3 and copper B (CU(B)). The BNC reduces molecular oxygen to 2 water molecules using 4 electrons from cytochrome c in the IMS and 4 protons from the mitochondrial matrix. COX1 is a catalytic core subunit containing heme A and the active site BNC with heme A3 and the copper atom CU(B). The polypeptide is Cytochrome c oxidase subunit 1 (COX1) (Saccharomyces cerevisiae (strain ATCC 204508 / S288c) (Baker's yeast)).